The chain runs to 101 residues: uncharacterized protein (101 aa).

This is an uncharacterized protein from Sulfolobus islandicus filamentous virus (isolate Iceland/Hveragerdi) (SIFV).